We begin with the raw amino-acid sequence, 318 residues long: L-lactate dehydrogenase (318 aa).

3 residues coordinate NAD(+): V16, D37, and Y69. Substrate contacts are provided by residues Q86, R92, and 124–127 (NPVD). NAD(+) is bound by residues 122-124 (ASN) and S147. Substrate is bound at residue 152–155 (DSAR). Residue H179 is the Proton acceptor of the active site. Y223 is modified (phosphotyrosine). A substrate-binding site is contributed by T232.

The protein belongs to the LDH/MDH superfamily. LDH family. Homotetramer.

It localises to the cytoplasm. It carries out the reaction (S)-lactate + NAD(+) = pyruvate + NADH + H(+). The protein operates within fermentation; pyruvate fermentation to lactate; (S)-lactate from pyruvate: step 1/1. Catalyzes the conversion of lactate to pyruvate. The sequence is that of L-lactate dehydrogenase from Mycoplasma mycoides subsp. mycoides SC (strain CCUG 32753 / NCTC 10114 / PG1).